The primary structure comprises 143 residues: ATP synthase subunit 9, mitochondrial (143 aa).

Residues 1–62 (MAASRVFAQR…ARQAFAARRQ (62 aa)) constitute a mitochondrion transit peptide. 2 helical membrane-spanning segments follow: residues 85 to 105 (IGLG…LLAV) and 119 to 139 (AILG…VAMM).

The protein belongs to the ATPase C chain family. As to quaternary structure, F-type ATPases have 2 components, CF(1) - the catalytic core - and CF(0) - the membrane proton channel. CF(1) has five subunits: alpha(3), beta(3), gamma(1), delta(1), epsilon(1). CF(0) has three main subunits: a, b and c.

Its subcellular location is the mitochondrion membrane. Functionally, mitochondrial membrane ATP synthase (F(1)F(0) ATP synthase or Complex V) produces ATP from ADP in the presence of a proton gradient across the membrane which is generated by electron transport complexes of the respiratory chain. F-type ATPases consist of two structural domains, F(1) - containing the extramembraneous catalytic core and F(0) - containing the membrane proton channel, linked together by a central stalk and a peripheral stalk. During catalysis, ATP synthesis in the catalytic domain of F(1) is coupled via a rotary mechanism of the central stalk subunits to proton translocation. Part of the complex F(0) domain. A homomeric c-ring of probably 10 subunits is part of the complex rotary element. This is ATP synthase subunit 9, mitochondrial (atp9) from Emericella nidulans (strain FGSC A4 / ATCC 38163 / CBS 112.46 / NRRL 194 / M139) (Aspergillus nidulans).